We begin with the raw amino-acid sequence, 438 residues long: Cysteine--tRNA ligase (438 aa).

Cys28 is a Zn(2+) binding site. A 'HIGH' region motif is present at residues 30 to 40; that stretch reads PTVYNHLHLGN. Zn(2+) contacts are provided by Cys207, His232, and Glu236. A 'KMSKS' region motif is present at residues 264-268; the sequence is KMSKS. Lys267 serves as a coordination point for ATP.

This sequence belongs to the class-I aminoacyl-tRNA synthetase family. In terms of assembly, monomer. Zn(2+) is required as a cofactor.

It localises to the cytoplasm. The enzyme catalyses tRNA(Cys) + L-cysteine + ATP = L-cysteinyl-tRNA(Cys) + AMP + diphosphate. This is Cysteine--tRNA ligase from Onion yellows phytoplasma (strain OY-M).